Here is a 573-residue protein sequence, read N- to C-terminus: Heat shock protein 60A (573 aa).

The N-terminal 57 residues, 1–57 (MFRLPVSLARSSISRQLAMRGYAKDVRFGPEVRAMMLQGVDVLADAVAVTMGPKGRN), are a transit peptide targeting the mitochondrion.

This sequence belongs to the chaperonin (HSP60) family.

Its subcellular location is the mitochondrion matrix. Its function is as follows. Prevents misfolding and promotes the refolding and proper assembly of unfolded polypeptides generated under stress conditions. The polypeptide is Heat shock protein 60A (Drosophila melanogaster (Fruit fly)).